The following is a 1374-amino-acid chain: DNA-directed RNA polymerase subunit beta (1374 aa).

This sequence belongs to the RNA polymerase beta chain family. In terms of assembly, the RNAP catalytic core consists of 2 alpha, 1 beta, 1 beta' and 1 omega subunit. When a sigma factor is associated with the core the holoenzyme is formed, which can initiate transcription.

The catalysed reaction is RNA(n) + a ribonucleoside 5'-triphosphate = RNA(n+1) + diphosphate. In terms of biological role, DNA-dependent RNA polymerase catalyzes the transcription of DNA into RNA using the four ribonucleoside triphosphates as substrates. This Acidovorax ebreus (strain TPSY) (Diaphorobacter sp. (strain TPSY)) protein is DNA-directed RNA polymerase subunit beta.